The following is a 921-amino-acid chain: MEYKNTLLMPKTEFPMRGNLPKREPAMQEKWAEMNIYEKVQEHTKGRPLFVLHDGPPYANGDIHMGHALNKVLKDFIVRYKSMTGFSAPYVPGWDTHGLPIEQALTNKGVKRKEMTVAEFRKLCAEYAYEQVERQREQFKRLGVRADWDNPYITLEPAYEAQQIKVFGDMAKKGYIYKGQKPVYWSPTSESALAEAEIEYQDKKSASIYVAFPVKDGKNVLEGDEKYIIWTTTPWTLPANLGISVHPELEYSIVKVNDEKYIIASELFETVAKTLEWENAEVVKTVKGSELEYTVAKHPFYDRDSLVMLGDHVTTDAGTGCVHTAPGHGEDDFVVGKKYGLEVLCPVDDKGVLTNEAPGFEGLFYDKANKPITEKLEEVGALLKLTFITHSYPHDWRTKKPIIFRATAQWFASIEAFRKELIEAVAETKWVPAWGETRLHNMVRDRGDWCISRQRAWGVPIPVFYAENGDPIITDETINHVADLFREHGSNVWFEREAKDLLPEGFTHPGSPNGEFRKETDIMDVWFDSGSSHQAVLEEREDLQRPADLYLEGSDQYRGWFNSSLSTAVAVTGKAPYKGVLSHGFVLDGEGRKMSKSIGNIVVPKKIMDQLGGDILRLWVSSVDYQSDVRISDDILKQVAEVYRKIRNTFRFLLGNLDDFKPSENAVAVAELREVDRYMLVKLNDLITKVKEAYETYDFAAVYHAIHNFCTIDLSSFYLDFAKDILYIEGANHEDRRAIQTVLYDVLVALTKLVTPILPHTADEVWPYIPGVTEESVQLTDMPEAVQLDDAEALKTKWDAFMTLRDDVLKALEVARNEKVIGKSLNASITLYPTAEMKAMLESISEDLKQLFIVSEYKLGGMMDEAPADAPKYEHTAVVVAQATGETCERCWVVSETIGKDAEHETLCERCATVVKENYVK.

Residues 57–67 carry the 'HIGH' region motif; that stretch reads PYANGDIHMGH. Glu-552 contacts L-isoleucyl-5'-AMP. The 'KMSKS' region signature appears at 593–597; that stretch reads KMSKS. Lys-596 contributes to the ATP binding site. Zn(2+) is bound by residues Cys-888, Cys-891, Cys-908, and Cys-911.

This sequence belongs to the class-I aminoacyl-tRNA synthetase family. IleS type 1 subfamily. As to quaternary structure, monomer. Zn(2+) is required as a cofactor.

The protein resides in the cytoplasm. It catalyses the reaction tRNA(Ile) + L-isoleucine + ATP = L-isoleucyl-tRNA(Ile) + AMP + diphosphate. Functionally, catalyzes the attachment of isoleucine to tRNA(Ile). As IleRS can inadvertently accommodate and process structurally similar amino acids such as valine, to avoid such errors it has two additional distinct tRNA(Ile)-dependent editing activities. One activity is designated as 'pretransfer' editing and involves the hydrolysis of activated Val-AMP. The other activity is designated 'posttransfer' editing and involves deacylation of mischarged Val-tRNA(Ile). This chain is Isoleucine--tRNA ligase, found in Bacillus cereus (strain B4264).